We begin with the raw amino-acid sequence, 173 residues long: Signal peptidase complex catalytic subunit SEC11 (173 aa).

Residues 1 to 15 (MLGVSGMQPRQLAAQ) lie on the Cytoplasmic side of the membrane. A helical; Signal-anchor for type II membrane protein transmembrane segment spans residues 16 to 36 (ILNFALVLSTAFMMWKGLSVV). Over 37 to 173 (SDSSSPIVVV…MGVMVVLQRE (137 aa)) the chain is Lumenal. Active-site charge relay system residues include S50, H89, and D115. Positions 159–170 (VMLGLMGVMVVL) are C-terminal short (CTS) helix.

It belongs to the peptidase S26B family. Component of the signal peptidase complex (SPC) composed of a catalytic subunit SEC11 and three accessory subunits SPC1, SPC2 and SPC3. The complex induces a local thinning of the ER membrane which is used to measure the length of the signal peptide (SP) h-region of protein substrates. This ensures the selectivity of the complex towards h-regions shorter than 18-20 amino acids. SPC associates with the translocon complex.

The protein resides in the endoplasmic reticulum membrane. It catalyses the reaction Cleavage of hydrophobic, N-terminal signal or leader sequences from secreted and periplasmic proteins.. Its function is as follows. Catalytic component of the signal peptidase complex (SPC) which catalyzes the cleavage of N-terminal signal sequences from nascent proteins as they are translocated into the lumen of the endoplasmic reticulum. Specifically cleaves N-terminal signal peptides that contain a hydrophobic alpha-helix (h-region) shorter than 18-20 amino acids. The sequence is that of Signal peptidase complex catalytic subunit SEC11 (SEC11) from Leptosphaeria maculans (strain JN3 / isolate v23.1.3 / race Av1-4-5-6-7-8) (Blackleg fungus).